A 569-amino-acid chain; its full sequence is Aspartic proteinase 3 (569 aa).

The first 21 residues, Met-1–Gly-21, serve as a signal peptide directing secretion. The propeptide occupies Lys-22–Arg-67. A Peptidase A1 domain is found at Tyr-83–Ala-475. An N-linked (GlcNAc...) asparagine glycan is attached at Asn-95. Asp-101 is an active-site residue. Residues Asn-203, Asn-232, Asn-242, Asn-245, Asn-299, and Asn-358 are each glycosylated (N-linked (GlcNAc...) asparagine). Residue Asp-371 is part of the active site. N-linked (GlcNAc...) asparagine glycosylation is found at Asn-480, Asn-522, and Asn-532. Asn-548 is lipidated: GPI-anchor amidated asparagine. Positions Val-549–Ile-569 are cleaved as a propeptide — removed in mature form.

Belongs to the peptidase A1 family. Consists of an alpha and a beta subunit, which are maintained together by a disulfide bond. In terms of processing, the zymogen is transported to the periplasm, where the propeptide is removed and the enzyme is further subjected to an internal, autocatalytic cleavage to generate an alpha/beta two-subunit endopeptidase. The proteolytic processing at the cell surface is regulated by the environmental pH. Extensively N-glycosylated.

It is found in the cell membrane. The enzyme catalyses Hydrolyzes various precursor proteins with Arg or Lys in P1, and commonly Arg or Lys also in P2. The P3 amino acid is usually non-polar, but otherwise additional basic amino acids are favorable in both non-prime and prime positions.. In terms of biological role, cleaves proteins C-terminally to mono- and paired-basic residues. Involved in the shedding of a subset of GPI-anchored plasma membrane proteins from the cell surface, including itself, GAS1 and MSB2. May also play a role in the maturation of GPI-mannoproteins associated with the cell wall. Can process the alpha-mating factor precursor. Required for cell wall integrity. The chain is Aspartic proteinase 3 (YPS1) from Saccharomyces cerevisiae (strain ATCC 204508 / S288c) (Baker's yeast).